Here is an 806-residue protein sequence, read N- to C-terminus: Zygotic DNA replication licensing factor mcm3 (806 aa).

In terms of domain architecture, MCM spans 295 to 502 (VFEQLSRSLA…HDREISDHVL (208 aa)). Residue 345 to 352 (GDPSVAKS) coordinates ATP. The Arginine finger signature appears at 477-480 (SRFD). A disordered region spans residues 662 to 738 (KKRRRREGES…TDSSAKPGLS (77 aa)). Residues 693-702 (AQDGESHDPY) are compositionally biased toward basic and acidic residues.

The protein belongs to the MCM family. In terms of assembly, component of the mcm2-7 complex (RLF-M). The complex forms a toroidal hexameric ring with the proposed subunit order mcm2-mcm6-mcm4-mcm7-mcm3-mcm5. Begins to associate with zmcm6 into mcm complexes at the neurula stage. Component of the CMG helicase complex, composed of the mcm2-7 complex, the GINS complex and cdc45.

The protein resides in the nucleus. It localises to the chromosome. It catalyses the reaction ATP + H2O = ADP + phosphate + H(+). Acts as a component of the mcm2-7 complex (mcm complex) which is the putative replicative helicase essential for 'once per cell cycle' DNA replication initiation and elongation in eukaryotic cells. The active ATPase sites in the mcm2-7 ring are formed through the interaction surfaces of two neighboring subunits such that a critical structure of a conserved arginine finger motif is provided in trans relative to the ATP-binding site of the Walker A box of the adjacent subunit. The six ATPase active sites, however, are likely to contribute differentially to the complex helicase activity. The existence of maternal and zygotic forms of mcm3 and mcm6 suggests that specific forms of mcm2-7 complexes may be used during different stages of development. This chain is Zygotic DNA replication licensing factor mcm3, found in Xenopus laevis (African clawed frog).